The chain runs to 309 residues: Heme A synthase (309 aa).

Topologically, residues 1-6 (MTKKLK) are cytoplasmic. The helical transmembrane segment at 7-27 (ILSVISTICMIPLLLGGALVT) threads the bilayer. The Extracellular portion of the chain corresponds to 28–62 (KTGSADGCGNSWPLCEGQFLPTKISFEMFIELSHR). Residues cysteine 35 and cysteine 42 are joined by a disulfide bond. Residue glutamate 58 is part of the active site. Heme o is bound at residue histidine 61. A helical transmembrane segment spans residues 63 to 83 (GVTGVVGILIVYLTYLVWKEL). At 84–88 (RHNKE) the chain is on the cytoplasmic side. Residues 89–109 (VVFLAFSALSLMILQALIGAA) traverse the membrane as a helical segment. The Extracellular portion of the chain corresponds to 110 to 123 (AVVWGQSDFALATH). Histidine 123 is a heme o binding site. The helical transmembrane segment at 124-144 (FGISLVCFAAVFLLMLQLFEI) threads the bilayer. Residues 145–159 (DKKLHTEDIHINKTH) are Cytoplasmic-facing. The helical transmembrane segment at 160–180 (RIEIYAISFYTMCVVYSGALV) threads the bilayer. The Extracellular segment spans residues 181-211 (RHTDSNLACRDWPLCVNNSSFGISDYNFYQW). An intrachain disulfide couples cysteine 189 to cysteine 195. A helical transmembrane segment spans residues 212-232 (VQMGHRLAAGILFIWTVILTI). Heme b is bound at residue histidine 216. The Cytoplasmic portion of the chain corresponds to 233 to 247 (RMVKHYKNSKVFYWS). Residues 248 to 268 (WLITLGLITLQVLFGALIIFT) traverse the membrane as a helical segment. At 269–271 (SLN) the chain is on the extracellular side. The helical transmembrane segment at 272–292 (LAIALFHALFITCYFGMLSFF) threads the bilayer. A heme b-binding site is contributed by histidine 278. The Cytoplasmic segment spans residues 293-309 (MHLSFRAKRREKYSNQS).

The protein belongs to the COX15/CtaA family. Type 1 subfamily. Interacts with CtaB. Heme b is required as a cofactor.

Its subcellular location is the cell membrane. The catalysed reaction is Fe(II)-heme o + 2 A + H2O = Fe(II)-heme a + 2 AH2. It functions in the pathway porphyrin-containing compound metabolism; heme A biosynthesis; heme A from heme O: step 1/1. Its function is as follows. Catalyzes the conversion of heme O to heme A by two successive hydroxylations of the methyl group at C8. The first hydroxylation forms heme I, the second hydroxylation results in an unstable dihydroxymethyl group, which spontaneously dehydrates, resulting in the formyl group of heme A. The polypeptide is Heme A synthase (Oceanobacillus iheyensis (strain DSM 14371 / CIP 107618 / JCM 11309 / KCTC 3954 / HTE831)).